The primary structure comprises 356 residues: MAQYECSEHMENFLRELPKCEHHVHLEGTLEPSLLFKLAKRNNITLPETFPKTVEECNDRYNRFADLQDFLDHYYIGMGVLITENDFYDLAMDYFTKAHSDGCLHSEVFFDPQGHVERNIDIDVVVQGFNRACKDANTKYGTTNKLIMCLLRHLPAENGLQTIHSASKYYQDGIIHGLGLDSSEKPFPPNLFTECYAHIKDNFPEVGLTAHAGEEGDHTFVSDALNLLKVSRIDHGVNSHQSEELMQRLAEQKTLLSLCPLSNVKLQVVKDVKELPIDKFFQMNVPFSINSDDPAYFGGYILDNYKAVHTRFGFTKDQWKIIALNGIKGSWCDDQRKNELISLVEEVYKKYNIEGC.

Zn(2+) is bound by residues His23, His25, and His211. Catalysis depends on Glu214, which acts as the Proton donor. Asp292 provides a ligand contact to Zn(2+). Asp293 contributes to the substrate binding site.

It belongs to the metallo-dependent hydrolases superfamily. Adenosine and AMP deaminases family. Adenine deaminase type 2 subfamily. It depends on Zn(2+) as a cofactor.

Its subcellular location is the cytoplasm. The protein resides in the nucleus. It carries out the reaction adenine + H2O + H(+) = hypoxanthine + NH4(+). Its function is as follows. Catalyzes the hydrolytic deamination of adenine to hypoxanthine. Plays an important role in the purine salvage pathway and in nitrogen catabolism. This is Adenine deaminase from Candida albicans (strain SC5314 / ATCC MYA-2876) (Yeast).